The following is a 359-amino-acid chain: Probable RNA methyltransferase RPD_2859 (359 aa).

The Proton acceptor role is filled by Glu99. The Radical SAM core domain maps to 105–330 (RFDGHTACIS…PVVVRDTQGR (226 aa)). Cys112 and Cys336 are disulfide-bonded. Positions 119, 123, and 126 each coordinate [4Fe-4S] cluster. S-adenosyl-L-methionine contacts are provided by residues 162-163 (GE), Ser194, 217-219 (SLH), and Asn293. The active-site S-methylcysteine intermediate is the Cys336.

The protein belongs to the radical SAM superfamily. RlmN family. The cofactor is [4Fe-4S] cluster.

The protein resides in the cytoplasm. This Rhodopseudomonas palustris (strain BisB5) protein is Probable RNA methyltransferase RPD_2859.